We begin with the raw amino-acid sequence, 762 residues long: 5-methyltetrahydropteroyltriglutamate--homocysteine methyltransferase (762 aa).

5-methyltetrahydropteroyltri-L-glutamate contacts are provided by residues 18–21 (REWK) and Lys112. L-homocysteine contacts are provided by residues 435 to 437 (IGS) and Glu488. L-methionine-binding positions include 435 to 437 (IGS) and Glu488. Residues 519-520 (RC) and Trp565 each bind 5-methyltetrahydropteroyltri-L-glutamate. Asp603 contacts L-homocysteine. Position 603 (Asp603) interacts with L-methionine. 5-methyltetrahydropteroyltri-L-glutamate is bound at residue Glu609. Residues His645, Cys647, and Glu669 each coordinate Zn(2+). Residue His698 is the Proton donor of the active site. Cys730 serves as a coordination point for Zn(2+).

This sequence belongs to the vitamin-B12 independent methionine synthase family. Zn(2+) is required as a cofactor.

It catalyses the reaction 5-methyltetrahydropteroyltri-L-glutamate + L-homocysteine = tetrahydropteroyltri-L-glutamate + L-methionine. It functions in the pathway amino-acid biosynthesis; L-methionine biosynthesis via de novo pathway; L-methionine from L-homocysteine (MetE route): step 1/1. Functionally, catalyzes the transfer of a methyl group from 5-methyltetrahydrofolate to homocysteine resulting in methionine formation. The sequence is that of 5-methyltetrahydropteroyltriglutamate--homocysteine methyltransferase from Bacillus velezensis (strain DSM 23117 / BGSC 10A6 / LMG 26770 / FZB42) (Bacillus amyloliquefaciens subsp. plantarum).